A 68-amino-acid chain; its full sequence is Large ribosomal subunit protein bL31 (68 aa).

Zn(2+) is bound by residues cysteine 16, cysteine 18, cysteine 36, and cysteine 39.

This sequence belongs to the bacterial ribosomal protein bL31 family. Type A subfamily. As to quaternary structure, part of the 50S ribosomal subunit. It depends on Zn(2+) as a cofactor.

Functionally, binds the 23S rRNA. The sequence is that of Large ribosomal subunit protein bL31 from Dictyoglomus thermophilum (strain ATCC 35947 / DSM 3960 / H-6-12).